Reading from the N-terminus, the 852-residue chain is Leucine--tRNA ligase (852 aa).

The short motif at 42 to 52 (PYPSGKLHMGH) is the 'HIGH' region element. The interval 586–606 (NKYVPADQVDPNDPKDPETGE) is disordered. The 'KMSKS' region signature appears at 614–618 (KMSKS). Lysine 617 is an ATP binding site.

The protein belongs to the class-I aminoacyl-tRNA synthetase family.

Its subcellular location is the cytoplasm. It carries out the reaction tRNA(Leu) + L-leucine + ATP = L-leucyl-tRNA(Leu) + AMP + diphosphate. This Picosynechococcus sp. (strain ATCC 27264 / PCC 7002 / PR-6) (Agmenellum quadruplicatum) protein is Leucine--tRNA ligase.